Here is a 62-residue protein sequence, read N- to C-terminus: High-potential iron-sulfur protein (62 aa).

4 residues coordinate [4Fe-4S] cluster: cysteine 22, cysteine 25, cysteine 40, and cysteine 55.

It belongs to the high-potential iron-sulfur protein (HiPIP) family. Homodimer.

In terms of biological role, specific class of high-redox-potential 4Fe-4S ferredoxins. Functions in anaerobic electron transport in most purple and in some other photosynthetic bacteria and in at least one genus (Paracoccus) of halophilic, denitrifying bacteria. In Rhodocyclus tenuis (Rhodospirillum tenue), this protein is High-potential iron-sulfur protein (hip).